Here is a 171-residue protein sequence, read N- to C-terminus: uncharacterized protein (171 aa).

An N-terminal signal peptide occupies residues 1-24; it reads MIFDSLTMTQSSLSLLLLTGAIFS. The Extracellular portion of the chain corresponds to 25–70; that stretch reads ISALYLTLFHRCATFSATSDLFLLVPLKFVSRDINDRLKTHYHHSC. The chain crosses the membrane as a helical span at residues 71–91; that stretch reads LGSPFLCIIFLFISPLLNYHF. The Cytoplasmic segment spans residues 92–140; it reads RSLVRPPKIHQKGSIPTLTKNAETRCSHHLKQAAATGEVCKVVVIIKGH. A helical transmembrane segment spans residues 141-161; the sequence is ILKDCSIFFFIIFPLIYPLFI. Over 162–171 the chain is Extracellular; the sequence is NCSSKYNGLQ.

It is found in the membrane. This is an uncharacterized protein from Saccharomyces cerevisiae (strain ATCC 204508 / S288c) (Baker's yeast).